Reading from the N-terminus, the 292-residue chain is Cyclin-dependent kinase 5 (292 aa).

The 283-residue stretch at 4-286 folds into the Protein kinase domain; it reads YEKLEKIGEG…AEEALQHPYF (283 aa). ATP contacts are provided by residues 10–18 and lysine 33; that span reads IGEGTYGTV. At tyrosine 15 the chain carries Phosphotyrosine; by ABL1, EPHA4 and FYN. Phosphothreonine is present on threonine 17. At lysine 56 the chain carries N6-acetyllysine. Serine 72 is modified (phosphoserine). The Proton acceptor role is filled by aspartate 126. Serine 159 carries the phosphoserine modification.

The protein belongs to the protein kinase superfamily. CMGC Ser/Thr protein kinase family. CDC2/CDKX subfamily. As to quaternary structure, heterodimer composed of a catalytic subunit CDK5 and a regulatory subunit CDK5R1 (p25) and macromolecular complex composed of at least CDK5, CDK5R1 (p35) and CDK5RAP1 or CDK5RAP2 or CDK5RAP3. Only the heterodimer shows kinase activity. Under neurotoxic stress and neuronal injury conditions, p35 is cleaved by calpain to generate p25 that hyperactivates CDK5, that becomes functionally disabled and often toxic. Found in a trimolecular complex with CABLES1 and ABL1. Interacts with CABLES1 and CABLES2. Interacts with AATK and GSTP1. Binds to HDAC1 when in complex with p25. Interaction with myristoylation p35 promotes CDK5 association with membranes. Both isoforms 1 and 2 interacts with beta-catenin/CTNNB1. Interacts with delta-catenin/CTNND2 and APEX1. Interacts with P53/TP53 in neurons. Interacts with EPHA4; may mediate the activation of NGEF by EPHA4. Interacts with PTK2/FAK1. The complex p35/CDK5 interacts with CLOCK. Interacts with HTR6. Post-translationally, phosphorylation on Tyr-15 by ABL1 and FYN, and on Ser-159 by casein kinase 1 promotes kinase activity. By contrast, phosphorylation at Thr-14 inhibits activity. In terms of processing, phosphorylation at Ser-159 is essential for maximal catalytic activity. As to expression, ubiquitously expressed. Accumulates in cortical neurons (at protein level). In terms of tissue distribution, expressed in the testis, skeletal muscle, colon, bone marrow and ovary.

It is found in the cytoplasm. The protein localises to the nucleus. It localises to the cell membrane. Its subcellular location is the perikaryon. The protein resides in the cell projection. It is found in the lamellipodium. The protein localises to the growth cone. It localises to the postsynaptic density. Its subcellular location is the synapse. The enzyme catalyses L-seryl-[protein] + ATP = O-phospho-L-seryl-[protein] + ADP + H(+). The catalysed reaction is L-threonyl-[protein] + ATP = O-phospho-L-threonyl-[protein] + ADP + H(+). Its activity is regulated as follows. Inhibited by 2-(1-ethyl-2-hydroxyethylamino)-6-benzylamino-9-isopropylpurine (roscovitine), 1-isopropyl-4-aminobenzyl-6-ether-linked benzimidazoles, resveratrol, AT-7519 and olomoucine. Activated by CDK5R1 (p35) and CDK5R2 (p39) during the development of the nervous system; degradation of CDK5R1 (p35) and CDK5R2 (p39) by proteasome result in down regulation of kinase activity, during this process, CDK5 phosphorylates p35 and induces its ubiquitination and subsequent degradation. Kinase activity is mainly determined by the amount of p35 available and subcellular location; reversible association to plasma membrane inhibits activity. Long-term inactivation as well as CDK5R1 (p25)-mediated hyperactivation of CDK5 triggers cell death. The pro-death activity of hyperactivated CDK5 is suppressed by membrane association of CDK5, via myristoylation of p35. Brain-derived neurotrophic factor, glial-derived neurotrophic factor, nerve growth factor (NGF), retinoic acid, laminin and neuregulin promote activity. Neurotoxicity enhances nuclear activity, thus leading to MEF2 phosphorylation and inhibition prior to apoptosis of cortical neurons. Repression by GSTP1 via p25/p35 translocation prevents neurodegeneration. Proline-directed serine/threonine-protein kinase essential for neuronal cell cycle arrest and differentiation and may be involved in apoptotic cell death in neuronal diseases by triggering abortive cell cycle re-entry. Interacts with D1 and D3-type G1 cyclins. Phosphorylates SRC, NOS3, VIM/vimentin, p35/CDK5R1, MEF2A, SIPA1L1, SH3GLB1, PXN, PAK1, MCAM/MUC18, SEPT5, SYN1, DNM1, AMPH, SYNJ1, CDK16, RAC1, RHOA, CDC42, TONEBP/NFAT5, MAPT/TAU, MAP1B, histone H1, p53/TP53, HDAC1, APEX1, PTK2/FAK1, huntingtin/HTT, ATM, MAP2, NEFH and NEFM. Regulates several neuronal development and physiological processes including neuronal survival, migration and differentiation, axonal and neurite growth, synaptogenesis, oligodendrocyte differentiation, synaptic plasticity and neurotransmission, by phosphorylating key proteins. Negatively regulates the CACNA1B/CAV2.2 -mediated Ca(2+) release probability at hippocampal neuronal soma and synaptic terminals. Activated by interaction with CDK5R1 (p35) and CDK5R2 (p39), especially in postmitotic neurons, and promotes CDK5R1 (p35) expression in an autostimulation loop. Phosphorylates many downstream substrates such as Rho and Ras family small GTPases (e.g. PAK1, RAC1, RHOA, CDC42) or microtubule-binding proteins (e.g. MAPT/TAU, MAP2, MAP1B), and modulates actin dynamics to regulate neurite growth and/or spine morphogenesis. Also phosphorylates exocytosis associated proteins such as MCAM/MUC18, SEPT5, SYN1, and CDK16/PCTAIRE1 as well as endocytosis associated proteins such as DNM1, AMPH and SYNJ1 at synaptic terminals. In the mature central nervous system (CNS), regulates neurotransmitter movements by phosphorylating substrates associated with neurotransmitter release and synapse plasticity; synaptic vesicle exocytosis, vesicles fusion with the presynaptic membrane, and endocytosis. Promotes cell survival by activating anti-apoptotic proteins BCL2 and STAT3, and negatively regulating of JNK3/MAPK10 activity. Phosphorylation of p53/TP53 in response to genotoxic and oxidative stresses enhances its stabilization by preventing ubiquitin ligase-mediated proteasomal degradation, and induces transactivation of p53/TP53 target genes, thus regulating apoptosis. Phosphorylation of p35/CDK5R1 enhances its stabilization by preventing calpain-mediated proteolysis producing p25/CDK5R1 and avoiding ubiquitin ligase-mediated proteasomal degradation. During aberrant cell-cycle activity and DNA damage, p25/CDK5 activity elicits cell-cycle activity and double-strand DNA breaks that precedes neuronal death by deregulating HDAC1. DNA damage triggered phosphorylation of huntingtin/HTT in nuclei of neurons protects neurons against polyglutamine expansion as well as DNA damage mediated toxicity. Phosphorylation of PXN reduces its interaction with PTK2/FAK1 in matrix-cell focal adhesions (MCFA) during oligodendrocytes (OLs) differentiation. Negative regulator of Wnt/beta-catenin signaling pathway. Activator of the GAIT (IFN-gamma-activated inhibitor of translation) pathway, which suppresses expression of a post-transcriptional regulon of proinflammatory genes in myeloid cells; phosphorylates the linker domain of glutamyl-prolyl tRNA synthetase (EPRS) in a IFN-gamma-dependent manner, the initial event in assembly of the GAIT complex. Phosphorylation of SH3GLB1 is required for autophagy induction in starved neurons. Phosphorylation of TONEBP/NFAT5 in response to osmotic stress mediates its rapid nuclear localization. MEF2 is inactivated by phosphorylation in nucleus in response to neurotoxin, thus leading to neuronal apoptosis. APEX1 AP-endodeoxyribonuclease is repressed by phosphorylation, resulting in accumulation of DNA damage and contributing to neuronal death. NOS3 phosphorylation down regulates NOS3-derived nitrite (NO) levels. SRC phosphorylation mediates its ubiquitin-dependent degradation and thus leads to cytoskeletal reorganization. May regulate endothelial cell migration and angiogenesis via the modulation of lamellipodia formation. Involved in dendritic spine morphogenesis by mediating the EFNA1-EPHA4 signaling. The complex p35/CDK5 participates in the regulation of the circadian clock by modulating the function of CLOCK protein: phosphorylates CLOCK at 'Thr-451' and 'Thr-461' and regulates the transcriptional activity of the CLOCK-BMAL1 heterodimer in association with altered stability and subcellular distribution. The polypeptide is Cyclin-dependent kinase 5 (Homo sapiens (Human)).